Reading from the N-terminus, the 185-residue chain is Orotate phosphoribosyltransferase (185 aa).

5-phospho-alpha-D-ribose 1-diphosphate contacts are provided by residues R94, K95, K98, H100, and 120-128 (EDVTTTGGS). The orotate site is built by T124 and R152.

The protein belongs to the purine/pyrimidine phosphoribosyltransferase family. PyrE subfamily. As to quaternary structure, homodimer. Mg(2+) is required as a cofactor.

The enzyme catalyses orotidine 5'-phosphate + diphosphate = orotate + 5-phospho-alpha-D-ribose 1-diphosphate. It functions in the pathway pyrimidine metabolism; UMP biosynthesis via de novo pathway; UMP from orotate: step 1/2. Catalyzes the transfer of a ribosyl phosphate group from 5-phosphoribose 1-diphosphate to orotate, leading to the formation of orotidine monophosphate (OMP). The protein is Orotate phosphoribosyltransferase of Thermococcus kodakarensis (strain ATCC BAA-918 / JCM 12380 / KOD1) (Pyrococcus kodakaraensis (strain KOD1)).